Consider the following 309-residue polypeptide: Type II methyltransferase M.HgiDI (309 aa).

The 297-residue stretch at 1 to 297 (MKTIDLFAGC…TSLQAYLNQP (297 aa)) folds into the SAM-dependent MTase C5-type domain. Cys-75 is an active-site residue.

It belongs to the class I-like SAM-binding methyltransferase superfamily. C5-methyltransferase family.

The enzyme catalyses a 2'-deoxycytidine in DNA + S-adenosyl-L-methionine = a 5-methyl-2'-deoxycytidine in DNA + S-adenosyl-L-homocysteine + H(+). Its function is as follows. A methylase that recognizes the double-stranded sequence 5'-GRCGYC-3', methylates C-? on both strands, and protects the DNA from cleavage by the HgiDI endonuclease. The polypeptide is Type II methyltransferase M.HgiDI (Herpetosiphon aurantiacus (Herpetosiphon giganteus)).